Here is a 259-residue protein sequence, read N- to C-terminus: Flap endonuclease Xni (259 aa).

Residue aspartate 109 coordinates Mg(2+). A 5'-3' exonuclease domain is found at 165-255 (VKPQQLSDYW…FNLQDLRFTA (91 aa)). Positions 176, 187, and 190 each coordinate K(+). The interaction with DNA stretch occupies residues 189-194 (GIGPKA).

It belongs to the Xni family. Mg(2+) is required as a cofactor. The cofactor is K(+).

In terms of biological role, has flap endonuclease activity. During DNA replication, flap endonucleases cleave the 5'-overhanging flap structure that is generated by displacement synthesis when DNA polymerase encounters the 5'-end of a downstream Okazaki fragment. This Vibrio vulnificus (strain YJ016) protein is Flap endonuclease Xni.